A 416-amino-acid chain; its full sequence is Casein kinase I isoform epsilon (416 aa).

Positions 9–277 (YRLGRKIGSG…YLRQLFRNLF (269 aa)) constitute a Protein kinase domain. ATP-binding positions include 15 to 23 (IGSGSFGDI) and K38. Residue D128 is the Proton acceptor of the active site. A compositionally biased stretch (basic and acidic residues) spans 301-318 (PEDMDRERREHEREERMG). The segment at 301–416 (PEDMDRERRE…TSVPFDHLGK (116 aa)) is disordered. The span at 324–338 (ATRALPPGPPAGATG) shows a compositional bias: low complexity. 2 stretches are compositionally biased toward polar residues: residues 350 to 365 (STPTSRIQQSGNTSPR) and 400 to 409 (SRISASQTSV).

The protein belongs to the protein kinase superfamily. CK1 Ser/Thr protein kinase family. Casein kinase I subfamily. Monomer. Component of the circadian core oscillator, which includes the CRY proteins, CLOCK, or NPAS2, BMAL1 or BMAL2, CSNK1E, and the PER proteins.

Its subcellular location is the cytoplasm. It catalyses the reaction L-seryl-[protein] + ATP = O-phospho-L-seryl-[protein] + ADP + H(+). The catalysed reaction is L-threonyl-[protein] + ATP = O-phospho-L-threonyl-[protein] + ADP + H(+). Its function is as follows. Casein kinases are operationally defined by their preferential utilization of acidic proteins such as caseins as substrates. Can phosphorylate a large number of proteins. Participates in Wnt signaling. Phosphorylates DVL1. Central component of the circadian clock. May act as a negative regulator of circadian rhythmicity by phosphorylating PER1 and PER2. Retains PER1 in the cytoplasm. The chain is Casein kinase I isoform epsilon (CSNK1E) from Gallus gallus (Chicken).